The following is a 273-amino-acid chain: Formamidopyrimidine-DNA glycosylase (273 aa).

The Schiff-base intermediate with DNA role is filled by P2. E3 functions as the Proton donor in the catalytic mechanism. K58 serves as the catalytic Proton donor; for beta-elimination activity. Residues H92, R111, and K153 each coordinate DNA. An FPG-type zinc finger spans residues 238 to 272 (KVYGREGQSCLSCSSTIIKIKHSGRSTFYCKTCQY). The active-site Proton donor; for delta-elimination activity is R262.

This sequence belongs to the FPG family. As to quaternary structure, monomer. The cofactor is Zn(2+).

The enzyme catalyses Hydrolysis of DNA containing ring-opened 7-methylguanine residues, releasing 2,6-diamino-4-hydroxy-5-(N-methyl)formamidopyrimidine.. It carries out the reaction 2'-deoxyribonucleotide-(2'-deoxyribose 5'-phosphate)-2'-deoxyribonucleotide-DNA = a 3'-end 2'-deoxyribonucleotide-(2,3-dehydro-2,3-deoxyribose 5'-phosphate)-DNA + a 5'-end 5'-phospho-2'-deoxyribonucleoside-DNA + H(+). Functionally, involved in base excision repair of DNA damaged by oxidation or by mutagenic agents. Acts as a DNA glycosylase that recognizes and removes damaged bases. Has a preference for oxidized purines, such as 7,8-dihydro-8-oxoguanine (8-oxoG). Has AP (apurinic/apyrimidinic) lyase activity and introduces nicks in the DNA strand. Cleaves the DNA backbone by beta-delta elimination to generate a single-strand break at the site of the removed base with both 3'- and 5'-phosphates. This chain is Formamidopyrimidine-DNA glycosylase, found in Rickettsia peacockii (strain Rustic).